A 304-amino-acid polypeptide reads, in one-letter code: Pseudouridine-5'-phosphate glycosidase (304 aa).

Residue E25 is the Proton donor of the active site. Substrate contacts are provided by K88 and V108. D140 contributes to the Mn(2+) binding site. Position 142–144 (142–144) interacts with substrate; that stretch reads SAD. K161 acts as the Nucleophile in catalysis.

The protein belongs to the pseudouridine-5'-phosphate glycosidase family. Homotrimer. Mn(2+) serves as cofactor.

It carries out the reaction D-ribose 5-phosphate + uracil = psi-UMP + H2O. Functionally, catalyzes the reversible cleavage of pseudouridine 5'-phosphate (PsiMP) to ribose 5-phosphate and uracil. Functions biologically in the cleavage direction, as part of a pseudouridine degradation pathway. The protein is Pseudouridine-5'-phosphate glycosidase of Paracoccus denitrificans (strain Pd 1222).